A 427-amino-acid polypeptide reads, in one-letter code: Gamma-glutamyl phosphate reductase (427 aa).

This sequence belongs to the gamma-glutamyl phosphate reductase family.

It localises to the cytoplasm. It carries out the reaction L-glutamate 5-semialdehyde + phosphate + NADP(+) = L-glutamyl 5-phosphate + NADPH + H(+). Its pathway is amino-acid biosynthesis; L-proline biosynthesis; L-glutamate 5-semialdehyde from L-glutamate: step 2/2. Catalyzes the NADPH-dependent reduction of L-glutamate 5-phosphate into L-glutamate 5-semialdehyde and phosphate. The product spontaneously undergoes cyclization to form 1-pyrroline-5-carboxylate. The polypeptide is Gamma-glutamyl phosphate reductase (Anaeromyxobacter dehalogenans (strain 2CP-1 / ATCC BAA-258)).